We begin with the raw amino-acid sequence, 443 residues long: MEEDIDTRKINSSFLRDHSYATEADIISTVEFNSTGELLATGDKGGRVVIFQREQENKNQPHRRGEYNVYSTFQSHEPEFDYLKSLEIEEKINKIRWLPQQNAAYFLLSTNDKTVKLWKVSERDKRPEGYNLKDEDGRIRDPCTITSLRVPVLRPMDLMVEATPRRVFSNAHTYHINSISVNSDYETYMSADDLRINLWNLEITNRSFNIVDIKPTNMEELTEVITAAEFHPHNCNTFVYSSSKGTIRLCDMRSSALCDRHSKLFEEPEDPSNRSFFSEIISSISDVKFNHSGRYIMTRDYLTVKVWDLNMENRPIETYQVHDYLRSKLCSLYENDCIFDKFECVWNGSDSVIMTGSYNNFFRMFDRNTKRDVTLEASRENSKPRAILKPRKVCVGGKRRKDEISVDSLDFSKKILHTAWHPSENIIAVAATNNLYIFQDKVN.

WD repeat units lie at residues 22 to 61 (TEADIISTVEFNSTGELLATGDKGGRVVIFQREQENKNQP), 87 to 128 (EIEE…KRPE), 171 to 209 (AHTYHINSISVNSDYETYMSADDLRINLWNLEITNRSFN), 220 to 260 (ELTE…LCDR), 279 to 317 (EIISSISDVKFNHSGRYIMTRDYLTVKVWDLNMENRPIE), 334 to 375 (ENDC…DVTL), and 410 to 443 (DFSKKILHTAWHPSENIIAVAATNNLYIFQDKVN).

This sequence belongs to the phosphatase 2A regulatory subunit B family. PP2A consists of a common heterodimeric core enzyme, composed of a 36 kDa catalytic subunit (subunit C) and a 65 kDa constant regulatory subunit (PR65 or subunit A), that associates with a variety of regulatory subunits.

It is found in the cytoplasm. The protein localises to the cytoskeleton. The protein resides in the membrane. In terms of biological role, the B regulatory subunit might modulate substrate selectivity and catalytic activity, and might also direct the localization of the catalytic enzyme to a particular subcellular compartment. Negatively controls the initiation of oocyte maturation. This is Serine/threonine-protein phosphatase 2A 55 kDa regulatory subunit B beta isoform (ppp2r2b) from Xenopus tropicalis (Western clawed frog).